We begin with the raw amino-acid sequence, 199 residues long: CASP-like protein 4C1 (199 aa).

Residues 1–35 are Cytoplasmic-facing; the sequence is MESGSVANDSGPLNSTPDVHLYGKTAAMKQRRSNT. The helical transmembrane segment at 36–56 threads the bilayer; the sequence is MLFVFRLLTFSFSLAAVLVMG. Residues 57–80 are Extracellular-facing; sequence TNKQKIRSAPQYLEVAWHDFDPFR. A helical membrane pass occupies residues 81-101; that stretch reads YVFAVNAIICVYSFVETWLAV. Residues 102 to 124 are Cytoplasmic-facing; that stretch reads YTLSRGTLLLPETFQVWFDYGHD. The helical transmembrane segment at 125–145 threads the bilayer; sequence QGFACLLFSANSVGIAMAQLL. Residues 146-169 lie on the Extracellular side of the membrane; it reads QSGSTLIQGQYYCSDAGAYCTQAR. The chain crosses the membrane as a helical span at residues 170-190; the sequence is VSIAMGFGAFLFLALSSFLTG. Residues 191 to 199 lie on the Cytoplasmic side of the membrane; the sequence is LRVARWYLP.

Belongs to the Casparian strip membrane proteins (CASP) family. As to quaternary structure, homodimer and heterodimers.

Its subcellular location is the cell membrane. The polypeptide is CASP-like protein 4C1 (Physcomitrium patens (Spreading-leaved earth moss)).